We begin with the raw amino-acid sequence, 485 residues long: Glycogen synthase (485 aa).

An ADP-alpha-D-glucose-binding site is contributed by Lys-17.

It belongs to the glycosyltransferase 1 family. Bacterial/plant glycogen synthase subfamily.

The catalysed reaction is [(1-&gt;4)-alpha-D-glucosyl](n) + ADP-alpha-D-glucose = [(1-&gt;4)-alpha-D-glucosyl](n+1) + ADP + H(+). It functions in the pathway glycan biosynthesis; glycogen biosynthesis. Synthesizes alpha-1,4-glucan chains using ADP-glucose. The chain is Glycogen synthase from Novosphingobium aromaticivorans (strain ATCC 700278 / DSM 12444 / CCUG 56034 / CIP 105152 / NBRC 16084 / F199).